The primary structure comprises 152 residues: Heavy metal-associated isoprenylated plant protein 20 (152 aa).

The HMA domain maps to 27–90 (MQTVNIKVKM…RIERTGKKAE (64 aa)). Residues C38 and C41 each contribute to the Cd(2+) site. Residue C149 is modified to Cysteine methyl ester. The S-farnesyl cysteine moiety is linked to residue C149. Positions 150-152 (TVM) are cleaved as a propeptide — removed in mature form.

Belongs to the HIPP family. Interacts with ZHD11/HB29. Expressed in roots, shoot apical meristem, leaves and flowers.

The protein resides in the membrane. In terms of biological role, heavy-metal-binding protein. Binds cadmium. May be involved in cadmium transport and play a role in cadmium detoxification. The sequence is that of Heavy metal-associated isoprenylated plant protein 20 from Arabidopsis thaliana (Mouse-ear cress).